Here is an 81-residue protein sequence, read N- to C-terminus: RNA-binding protein Hfq (81 aa).

One can recognise a Sm domain in the interval 10 to 69 (DPFLNTLRKEHIPVSIYLVNGIKLQGHIDSFDQYVVLLKNTVTQMVYKHAISTVVPARAV).

It belongs to the Hfq family. As to quaternary structure, homohexamer.

Its function is as follows. RNA chaperone that binds small regulatory RNA (sRNAs) and mRNAs to facilitate mRNA translational regulation in response to envelope stress, environmental stress and changes in metabolite concentrations. Also binds with high specificity to tRNAs. The polypeptide is RNA-binding protein Hfq (Nitrosospira multiformis (strain ATCC 25196 / NCIMB 11849 / C 71)).